The chain runs to 430 residues: Mitochondrial distribution and morphology protein 10 (430 aa).

Residues serine 215–glycine 234 show a composition bias toward polar residues. Disordered regions lie at residues serine 215–valine 237 and leucine 339–glutamate 393.

The protein belongs to the MDM10 family. As to quaternary structure, component of the ER-mitochondria encounter structure (ERMES) or MDM complex, composed of MMM1, MDM10, MDM12 and MDM34. Associates with the mitochondrial outer membrane sorting assembly machinery SAM(core) complex.

The protein localises to the mitochondrion outer membrane. Its function is as follows. Component of the ERMES/MDM complex, which serves as a molecular tether to connect the endoplasmic reticulum and mitochondria. Components of this complex are involved in the control of mitochondrial shape and protein biogenesis and may function in phospholipid exchange. MDM10 is involved in the late assembly steps of the general translocase of the mitochondrial outer membrane (TOM complex). Functions in the TOM40-specific route of the assembly of outer membrane beta-barrel proteins, including the association of TOM40 with the receptor TOM22 and small TOM proteins. Can associate with the SAM(core) complex as well as the MDM12-MMM1 complex, both involved in late steps of the major beta-barrel assembly pathway, that is responsible for biogenesis of all outer membrane beta-barrel proteins. May act as a switch that shuttles between both complexes and channels precursor proteins into the TOM40-specific pathway. Plays a role in mitochondrial morphology and in the inheritance of mitochondria. The protein is Mitochondrial distribution and morphology protein 10 of Chaetomium globosum (strain ATCC 6205 / CBS 148.51 / DSM 1962 / NBRC 6347 / NRRL 1970) (Soil fungus).